A 374-amino-acid chain; its full sequence is MANKDYYEVLGLEKGASDDEIKKAFRKLAIKYHPDKNRGNKEAEEKFKEINEAYQVLSDPDKKANYDRFGTADFNGGGGFGDFSGGFGDFGDLGDIFNSFFGGGFSGGSSRARKDAPQRGNDMEYSISLTFEEAVFGVEKSINITRSENCETCGGTGAKKGTSPKTCDKCGGTGTIRVQRNTPLGSFVTQSSCDKCGGRGTIISDPCHECHGAGHVRKKRKISVKIPAGVDTGNVIPLRGQGEHGKNGGPAGDLYISIKVTPHKKFKREGFDIYIDTHISFPKAALGTDMTVPTIDGDVKYTIPAGTQSGTVFRLKGKGVQRVNGGGRGNQYVKVIVDTPKALNDKQREALKMFMEASGEAKSEKKSGFKRFFE.

The J domain maps to 5 to 70 (DYYEVLGLEK…DKKANYDRFG (66 aa)). The CR-type zinc finger occupies 137–219 (GVEKSINITR…CHGAGHVRKK (83 aa)). The Zn(2+) site is built by cysteine 150, cysteine 153, cysteine 167, cysteine 170, cysteine 193, cysteine 196, cysteine 207, and cysteine 210. 4 CXXCXGXG motif repeats span residues 150–157 (CETCGGTG), 167–174 (CDKCGGTG), 193–200 (CDKCGGRG), and 207–214 (CHECHGAG).

Belongs to the DnaJ family. As to quaternary structure, homodimer. Zn(2+) serves as cofactor.

The protein localises to the cytoplasm. In terms of biological role, participates actively in the response to hyperosmotic and heat shock by preventing the aggregation of stress-denatured proteins and by disaggregating proteins, also in an autonomous, DnaK-independent fashion. Unfolded proteins bind initially to DnaJ; upon interaction with the DnaJ-bound protein, DnaK hydrolyzes its bound ATP, resulting in the formation of a stable complex. GrpE releases ADP from DnaK; ATP binding to DnaK triggers the release of the substrate protein, thus completing the reaction cycle. Several rounds of ATP-dependent interactions between DnaJ, DnaK and GrpE are required for fully efficient folding. Also involved, together with DnaK and GrpE, in the DNA replication of plasmids through activation of initiation proteins. In Clostridium acetobutylicum (strain ATCC 824 / DSM 792 / JCM 1419 / IAM 19013 / LMG 5710 / NBRC 13948 / NRRL B-527 / VKM B-1787 / 2291 / W), this protein is Chaperone protein DnaJ.